A 282-amino-acid chain; its full sequence is Methyltransferase tpcH (282 aa).

The protein belongs to the class I-like SAM-binding methyltransferase superfamily. As to expression, specifically expressed in conidia.

It functions in the pathway secondary metabolite biosynthesis. Functionally, methyltransferase; part of the gene cluster that mediates the biosynthesis of trypacidin, a mycotoxin with antiprotozoal activity and that plays a role in the infection process. The pathway begins with the synthesis of atrochrysone thioester by the polyketide synthase (PKS) tpcC. The atrochrysone carboxyl ACP thioesterase tpcB then breaks the thioester bond and releases the atrochrysone carboxylic acid from tpcC. The decarboxylase tpcK converts atrochrysone carboxylic acid to atrochrysone which is further reduced into emodin anthrone. The next step is performed by the emodin anthrone oxygenase tpcL that catalyzes the oxidation of emodinanthrone to emodin. Emodin O-methyltransferase encoded by tpcA catalyzes methylation of the 8-hydroxy group of emodin to form questin. Ring cleavage of questin by questin oxidase tpcI leads to desmethylsulochrin via several intermediates including questin epoxide. Another methylation step catalyzed by tpcM leads to the formation of sulochrin which is further converted to monomethylsulfochrin by tpcH. Finally, the tpcJ catalyzes the conversion of monomethylsulfochrin to trypacidin. Trypacidin is toxic for human pulmonary and bronchial epithelial cells by initiating the intracellular formation of nitric oxide (NO) and hydrogen peroxide (H(2)O(2)), thus triggering host necrotic cell death. The trypacidin pathway is also able to produce endocrocin via a distinct route from the endocrocin Enc pathway. This is Methyltransferase tpcH from Aspergillus fumigatus (strain ATCC MYA-4609 / CBS 101355 / FGSC A1100 / Af293) (Neosartorya fumigata).